The sequence spans 258 residues: MKNYLLQIEYFGKNYCGWQRQSHSPSIQEELEKALSKIANQNIEVTCAGRTDTGVHATSQVVNFHSDADRNLSSWMRGTNALLPQGIKILDIKEVDNDFNSRFTATNRTYNYIIYNSAISSPILAEHCLWENRQLNIDKMNQACKYLLGEQDFTSFRSSQCQSNTPFRNIQKAEFIKQGSFIVFEVVGNAFLHHMIRNFIGSLLKIGLEFESPEWIKLVLEAKDRTKAAETAKAHGLYFVGVEYPEFSFRRRVIELFC.

Catalysis depends on Asp52, which acts as the Nucleophile. Tyr110 contributes to the substrate binding site.

This sequence belongs to the tRNA pseudouridine synthase TruA family. In terms of assembly, homodimer.

The catalysed reaction is uridine(38/39/40) in tRNA = pseudouridine(38/39/40) in tRNA. Functionally, formation of pseudouridine at positions 38, 39 and 40 in the anticodon stem and loop of transfer RNAs. The polypeptide is tRNA pseudouridine synthase A (Francisella philomiragia subsp. philomiragia (strain ATCC 25017 / CCUG 19701 / FSC 153 / O#319-036)).